Here is a 142-residue protein sequence, read N- to C-terminus: Large-conductance mechanosensitive channel (142 aa).

3 helical membrane-spanning segments follow: residues 10 to 30, 40 to 60, and 86 to 106; these read FAVKGNVIDLAVGVIIGGAFG, LIMPVVGLVFGKLDFSNLFIV, and GNFITVAVNFVILAFIIFVMV.

It belongs to the MscL family. Homopentamer.

It localises to the cell inner membrane. Its function is as follows. Channel that opens in response to stretch forces in the membrane lipid bilayer. May participate in the regulation of osmotic pressure changes within the cell. This Acidovorax ebreus (strain TPSY) (Diaphorobacter sp. (strain TPSY)) protein is Large-conductance mechanosensitive channel.